Here is a 613-residue protein sequence, read N- to C-terminus: Phostensin (613 aa).

A compositionally biased stretch (basic and acidic residues) spans 15–33; the sequence is RRQEEASVRGREKAERERL. Disordered stretches follow at residues 15-231 and 266-505; these read RRQE…SAYQ and GEER…GKKR. S54, S125, S133, S175, and S195 each carry phosphoserine. Basic and acidic residues-rich tracts occupy residues 104–154 and 167–191; these read RSEE…ERRL and LEARDWRQSPGEVGDRSSRLSEPWK. T199 carries the post-translational modification Phosphothreonine. Over residues 199-221 the composition is skewed to basic and acidic residues; it reads TPERSLRLAESREQSPRRKEVES. Position 224 is a phosphoserine (S224). The segment covering 266–282 has biased composition (basic and acidic residues); sequence GEERQGYSEKCGRKEEW. Residues 301 to 310 are compositionally biased toward polar residues; that stretch reads REAQGSSSTG. Composition is skewed to basic and acidic residues over residues 314 to 327, 340 to 350, and 357 to 367; these read AEQRPVEDGERGMK, KAREWTPRDIE, and EPSESAEKRLE. A phosphoserine mark is found at S368 and S432. A compositionally biased stretch (pro residues) spans 424 to 446; sequence QPPPPAPLSPPPPAPTAPQPPGD. Residue K457 is modified to N6-acetyllysine. Positions 476–499 are enriched in low complexity; the sequence is PRRSVPPTTPATPTSPATADAAVP. A phosphoserine mark is found at S490 and S530. A disordered region spans residues 552–594; sequence QYPSESSVLEELGPEPEVPSAPNPPAAQPDDEEDEEELLLLQP. The span at 567 to 578 shows a compositional bias: pro residues; sequence PEVPSAPNPPAA. The span at 580-589 shows a compositional bias: acidic residues; the sequence is PDDEEDEEEL.

As to quaternary structure, interacts with Protein phosphatase 1 (PP1).

The protein localises to the cytoplasm. It is found in the cytoskeleton. In terms of biological role, may target protein phosphatase 1 to F-actin cytoskeleton. This Macaca mulatta (Rhesus macaque) protein is Phostensin (PPP1R18).